We begin with the raw amino-acid sequence, 99 residues long: Large ribosomal subunit protein eL21 (99 aa).

Belongs to the eukaryotic ribosomal protein eL21 family.

The polypeptide is Large ribosomal subunit protein eL21 (Staphylothermus marinus (strain ATCC 43588 / DSM 3639 / JCM 9404 / F1)).